Reading from the N-terminus, the 640-residue chain is Threonine--tRNA ligase (640 aa).

In terms of domain architecture, TGS spans 1–60; the sequence is MKITFPDGAVKEFEPGVSTADIAASISPGLKKKALAGKLNGELLDLVTPIHEDGAIEIVT. Residues 241-538 are catalytic; sequence DHRKLGKELD…LIEEYKGAFP (298 aa). Zn(2+) is bound by residues cysteine 334, histidine 385, and histidine 515.

The protein belongs to the class-II aminoacyl-tRNA synthetase family. Homodimer. It depends on Zn(2+) as a cofactor.

Its subcellular location is the cytoplasm. It catalyses the reaction tRNA(Thr) + L-threonine + ATP = L-threonyl-tRNA(Thr) + AMP + diphosphate + H(+). In terms of biological role, catalyzes the attachment of threonine to tRNA(Thr) in a two-step reaction: L-threonine is first activated by ATP to form Thr-AMP and then transferred to the acceptor end of tRNA(Thr). Also edits incorrectly charged L-seryl-tRNA(Thr). This is Threonine--tRNA ligase from Listeria monocytogenes serotype 4b (strain CLIP80459).